A 156-amino-acid chain; its full sequence is MNATRKQRLCLVIGVLAAAALAVTLIVFALQRNMSYLFTPSQVRAGAAAGYQQFRLGGMVKAGSIQRAADSLKVSFTVIDKNAATPVEYTGILPDLFRDNQSVIANGRMQGGRFVANEVLAKHDETYMPKELKDAMAEGHLGKPIPATAAPLTTPR.

Residues 1 to 8 are Cytoplasmic-facing; the sequence is MNATRKQR. The helical; Signal-anchor for type II membrane protein transmembrane segment at 9–29 threads the bilayer; that stretch reads LCLVIGVLAAAALAVTLIVFA. Topologically, residues 30–156 are periplasmic; sequence LQRNMSYLFT…ATAAPLTTPR (127 aa). The heme site is built by His-123 and Tyr-127.

It belongs to the CcmE/CycJ family.

It is found in the cell inner membrane. Its function is as follows. Heme chaperone required for the biogenesis of c-type cytochromes. Transiently binds heme delivered by CcmC and transfers the heme to apo-cytochromes in a process facilitated by CcmF and CcmH. This is Cytochrome c-type biogenesis protein CcmE 1 from Xanthomonas oryzae pv. oryzae (strain MAFF 311018).